The chain runs to 227 residues: Transmembrane emp24 domain-containing protein 1 (227 aa).

The signal sequence occupies residues 1–23 (MMAAGAALALALWLLMPPVGVGG). Topologically, residues 24–194 (AGPPPIQDGE…LQEGNLERVN (171 aa)) are extracellular. A GOLD domain is found at 43-125 (KQCFYQSAPA…EKLVFFELIF (83 aa)). Positions 145-170 (EMLDVKMEDIKESIETMRTRLERSIQ) form a coiled coil. The chain crosses the membrane as a helical span at residues 195–215 (FWSAVNVAVLLLVAVLQVCTL). Residues 216 to 227 (KRFFQDKRPVPT) lie on the Cytoplasmic side of the membrane. Positions 218 to 219 (FF) match the COPII vesicle coat-binding motif. Residues 218–227 (FFQDKRPVPT) carry the COPI vesicle coat-binding motif.

It belongs to the EMP24/GP25L family. In terms of assembly, homodimer in endoplasmic reticulum, endoplasmic reticulum-Golgi intermediate compartment and cis-Golgi network. Interacts with IL1RL1. Interacts with RNF26; this interaction is important to modulate innate immune signaling through the cGAS-STING pathway.

It is found in the cell membrane. Its subcellular location is the endoplasmic reticulum membrane. The protein localises to the golgi apparatus. The protein resides in the cis-Golgi network membrane. It localises to the endoplasmic reticulum-Golgi intermediate compartment membrane. Potential role in vesicular protein trafficking, mainly in the early secretory pathway. May act as a cargo receptor at the lumenal side for incorporation of secretory cargo molecules into transport vesicles and may be involved in vesicle coat formation at the cytoplasmic side. Plays a positive role in IL-33-mediated IL-8 and IL-6 production by interacting with interleukin-33 receptor IL1RL1. Plays also a role in the modulation of innate immune signaling through the cGAS-STING pathway by interacting with RNF26. The protein is Transmembrane emp24 domain-containing protein 1 (TMED1) of Pongo abelii (Sumatran orangutan).